A 607-amino-acid chain; its full sequence is Cytosolic Fe-S cluster assembly factor NAR1 (607 aa).

The [4Fe-4S] cluster site is built by Cys-20, Cys-82, Cys-85, Cys-88, Cys-204, and Cys-259. Residues 430–476 are disordered; that stretch reads KPNTGKSTNTTTTTTKSKVNPLAARRRARIANNRGKPETKSTSEVNS. Low complexity predominate over residues 432–447; that stretch reads NTGKSTNTTTTTTKSK. Residues Cys-496 and Cys-500 each coordinate [4Fe-4S] cluster.

It belongs to the NARF family.

Component of the cytosolic Fe/S protein assembly machinery. Required for maturation of extramitochondrial Fe/S proteins. May play a role in the transfer of pre-assembled Fe/S clusters to target apoproteins. This Candida albicans (strain SC5314 / ATCC MYA-2876) (Yeast) protein is Cytosolic Fe-S cluster assembly factor NAR1 (NAR1).